We begin with the raw amino-acid sequence, 402 residues long: S-adenosylmethionine synthase (402 aa).

Histidine 16 provides a ligand contact to ATP. Aspartate 18 is a Mg(2+) binding site. Glutamate 44 contacts K(+). Residues glutamate 57 and glutamine 103 each coordinate L-methionine. Positions 103–113 (QSPDIAQGVDT) are flexible loop. ATP is bound by residues 178–180 (DGK), 249–250 (KF), aspartate 258, 264–265 (RK), alanine 281, and lysine 285. Aspartate 258 lines the L-methionine pocket. Residue lysine 289 coordinates L-methionine.

This sequence belongs to the AdoMet synthase family. As to quaternary structure, homotetramer; dimer of dimers. Requires Mg(2+) as cofactor. The cofactor is K(+).

The protein resides in the cytoplasm. The catalysed reaction is L-methionine + ATP + H2O = S-adenosyl-L-methionine + phosphate + diphosphate. It functions in the pathway amino-acid biosynthesis; S-adenosyl-L-methionine biosynthesis; S-adenosyl-L-methionine from L-methionine: step 1/1. Functionally, catalyzes the formation of S-adenosylmethionine (AdoMet) from methionine and ATP. The overall synthetic reaction is composed of two sequential steps, AdoMet formation and the subsequent tripolyphosphate hydrolysis which occurs prior to release of AdoMet from the enzyme. This is S-adenosylmethionine synthase from Mycolicibacterium vanbaalenii (strain DSM 7251 / JCM 13017 / BCRC 16820 / KCTC 9966 / NRRL B-24157 / PYR-1) (Mycobacterium vanbaalenii).